The sequence spans 138 residues: Vesicle transport protein GOT1B (138 aa).

N-acetylmethionine is present on methionine 1. At 1–9 (MISLTDTQK) the chain is on the cytoplasmic side. A helical membrane pass occupies residues 10 to 30 (IGMGLTGFGVFFLFFGMILFF). Residues 31 to 32 (DK) lie on the Lumenal side of the membrane. A helical transmembrane segment spans residues 33 to 53 (ALLAIGNVLFVAGLAFVIGLE). The Cytoplasmic segment spans residues 54 to 68 (RTFRFFFQKHKMKAT). A helical membrane pass occupies residues 69–89 (GFFLGGVFVVLIGWPLIGMIF). Position 90 (glutamate 90) is a topological domain, lumenal. The helical transmembrane segment at 91–109 (IYGFFLLFRGFFPVVVGFI) threads the bilayer. Residues 110 to 138 (RRVPVLGSLLNLPGIRSFVDKVGESNNMV) are Cytoplasmic-facing.

It belongs to the GOT1 family.

It localises to the golgi apparatus membrane. In terms of biological role, may be involved in fusion of ER-derived transport vesicles with the Golgi complex. The chain is Vesicle transport protein GOT1B from Bos taurus (Bovine).